The sequence spans 87 residues: Diazepam-binding inhibitor-like 5 (87 aa).

The 86-residue stretch at serine 2–cysteine 87 folds into the ACB domain. An acyl-CoA contacts are provided by residues tyrosine 29 to lysine 33, lysine 55, and tyrosine 74.

This sequence belongs to the ACBP family. In terms of tissue distribution, testis.

Its subcellular location is the cytoplasm. In terms of biological role, may be involved in the energy metabolism of the mature sperm. In Rattus norvegicus (Rat), this protein is Diazepam-binding inhibitor-like 5 (Dbil5).